The following is an 86-amino-acid chain: Large ribosomal subunit protein bL31m (86 aa).

The transit peptide at 1–18 (MKCSLRLFEKAGRLSVRS) directs the protein to the mitochondrion.

This sequence belongs to the bacterial ribosomal protein bL31 family. Highly divergent. As to quaternary structure, component of the mitochondrial large ribosomal subunit (mt-LSU). Mature yeast 74S mitochondrial ribosomes consist of a small (37S) and a large (54S) subunit. The 37S small subunit contains a 15S ribosomal RNA (15S mt-rRNA) and at least 32 different proteins. The 54S large subunit contains a 21S rRNA (21S mt-rRNA) and at least 45 different proteins.

The protein resides in the mitochondrion. Functionally, component of the mitochondrial ribosome (mitoribosome), a dedicated translation machinery responsible for the synthesis of mitochondrial genome-encoded proteins, including at least some of the essential transmembrane subunits of the mitochondrial respiratory chain. The mitoribosomes are attached to the mitochondrial inner membrane and translation products are cotranslationally integrated into the membrane. This chain is Large ribosomal subunit protein bL31m (tam9), found in Schizosaccharomyces pombe (strain 972 / ATCC 24843) (Fission yeast).